We begin with the raw amino-acid sequence, 328 residues long: D-cysteine desulfhydrase (328 aa).

Position 51 is an N6-(pyridoxal phosphate)lysine (K51).

This sequence belongs to the ACC deaminase/D-cysteine desulfhydrase family. As to quaternary structure, homodimer. The cofactor is pyridoxal 5'-phosphate.

The catalysed reaction is D-cysteine + H2O = hydrogen sulfide + pyruvate + NH4(+) + H(+). Functionally, catalyzes the alpha,beta-elimination reaction of D-cysteine and of several D-cysteine derivatives. It could be a defense mechanism against D-cysteine. This chain is D-cysteine desulfhydrase, found in Salmonella paratyphi B (strain ATCC BAA-1250 / SPB7).